The following is a 180-amino-acid chain: Large ribosomal subunit protein uL10 (180 aa).

The segment at 161-180 (SKAEGSEETESNETTETVEE) is disordered. Acidic residues predominate over residues 166–180 (SEETESNETTETVEE).

It belongs to the universal ribosomal protein uL10 family. Part of the ribosomal stalk of the 50S ribosomal subunit. The N-terminus interacts with L11 and the large rRNA to form the base of the stalk. The C-terminus forms an elongated spine to which L12 dimers bind in a sequential fashion forming a multimeric L10(L12)X complex.

In terms of biological role, forms part of the ribosomal stalk, playing a central role in the interaction of the ribosome with GTP-bound translation factors. This chain is Large ribosomal subunit protein uL10, found in Finegoldia magna (strain ATCC 29328 / DSM 20472 / WAL 2508) (Peptostreptococcus magnus).